Here is an 885-residue protein sequence, read N- to C-terminus: Alanine--tRNA ligase (885 aa).

Zn(2+) is bound by residues His571, His575, Cys674, and His678.

It belongs to the class-II aminoacyl-tRNA synthetase family. Zn(2+) serves as cofactor.

It is found in the cytoplasm. It catalyses the reaction tRNA(Ala) + L-alanine + ATP = L-alanyl-tRNA(Ala) + AMP + diphosphate. Functionally, catalyzes the attachment of alanine to tRNA(Ala) in a two-step reaction: alanine is first activated by ATP to form Ala-AMP and then transferred to the acceptor end of tRNA(Ala). Also edits incorrectly charged Ser-tRNA(Ala) and Gly-tRNA(Ala) via its editing domain. The polypeptide is Alanine--tRNA ligase (Clavibacter sepedonicus (Clavibacter michiganensis subsp. sepedonicus)).